We begin with the raw amino-acid sequence, 256 residues long: DNA repair protein RecO (256 aa).

The protein belongs to the RecO family.

Functionally, involved in DNA repair and RecF pathway recombination. This is DNA repair protein RecO from Rhizobium etli (strain CIAT 652).